Reading from the N-terminus, the 158-residue chain is 2-C-methyl-D-erythritol 2,4-cyclodiphosphate synthase (158 aa).

2 residues coordinate a divalent metal cation: D9 and H11. 4-CDP-2-C-methyl-D-erythritol 2-phosphate is bound by residues 9–11 and 35–36; these read DVH and HS. H43 is a binding site for a divalent metal cation. 4-CDP-2-C-methyl-D-erythritol 2-phosphate contacts are provided by residues 57–59, 62–66, 101–107, 133–136, F140, and R143; these read DIG, FPDTD, AQAPKMA, and TTTE.

Belongs to the IspF family. In terms of assembly, homotrimer. Requires a divalent metal cation as cofactor.

It catalyses the reaction 4-CDP-2-C-methyl-D-erythritol 2-phosphate = 2-C-methyl-D-erythritol 2,4-cyclic diphosphate + CMP. It functions in the pathway isoprenoid biosynthesis; isopentenyl diphosphate biosynthesis via DXP pathway; isopentenyl diphosphate from 1-deoxy-D-xylulose 5-phosphate: step 4/6. Involved in the biosynthesis of isopentenyl diphosphate (IPP) and dimethylallyl diphosphate (DMAPP), two major building blocks of isoprenoid compounds. Catalyzes the conversion of 4-diphosphocytidyl-2-C-methyl-D-erythritol 2-phosphate (CDP-ME2P) to 2-C-methyl-D-erythritol 2,4-cyclodiphosphate (ME-CPP) with a corresponding release of cytidine 5-monophosphate (CMP). The polypeptide is 2-C-methyl-D-erythritol 2,4-cyclodiphosphate synthase (Vibrio cholerae serotype O1 (strain ATCC 39541 / Classical Ogawa 395 / O395)).